Consider the following 211-residue polypeptide: V-type ATP synthase subunit D (211 aa).

It belongs to the V-ATPase D subunit family.

Produces ATP from ADP in the presence of a proton gradient across the membrane. This Fusobacterium nucleatum subsp. nucleatum (strain ATCC 25586 / DSM 15643 / BCRC 10681 / CIP 101130 / JCM 8532 / KCTC 2640 / LMG 13131 / VPI 4355) protein is V-type ATP synthase subunit D.